A 463-amino-acid chain; its full sequence is Glycine--tRNA ligase (463 aa).

Substrate-binding residues include arginine 98 and glutamate 174. ATP is bound by residues 206–208 (RNE), 216–221 (FRTREF), 290–291 (EL), and 334–337 (GADR). 221–225 (FEQME) contacts substrate. 330–334 (EPSLG) provides a ligand contact to substrate.

It belongs to the class-II aminoacyl-tRNA synthetase family. In terms of assembly, homodimer.

The protein resides in the cytoplasm. The enzyme catalyses tRNA(Gly) + glycine + ATP = glycyl-tRNA(Gly) + AMP + diphosphate. Its function is as follows. Catalyzes the attachment of glycine to tRNA(Gly). In Staphylococcus aureus (strain bovine RF122 / ET3-1), this protein is Glycine--tRNA ligase.